A 117-amino-acid polypeptide reads, in one-letter code: MDKKTARLSRSKRTRIKLKELGHTRLCVYRTPRHVYAQVISGDGSTVLAAASTVEKDVKAKCKYTGNVNSAAIVGEVIANRCKEKGISQVAFDRSGYKYHGRVKALAEAAREHGLQF.

This sequence belongs to the universal ribosomal protein uL18 family. As to quaternary structure, part of the 50S ribosomal subunit; part of the 5S rRNA/L5/L18/L25 subcomplex. Contacts the 5S and 23S rRNAs.

This is one of the proteins that bind and probably mediate the attachment of the 5S RNA into the large ribosomal subunit, where it forms part of the central protuberance. The sequence is that of Large ribosomal subunit protein uL18 from Francisella philomiragia subsp. philomiragia (strain ATCC 25017 / CCUG 19701 / FSC 153 / O#319-036).